Consider the following 401-residue polypeptide: Tyrosine--tRNA ligase (401 aa).

The short motif at Pro-42–His-51 is the 'HIGH' region element. Positions Lys-226–Ser-230 match the 'KMSKS' region motif. Residue Lys-229 coordinates ATP. The region spanning Met-334–Leu-394 is the S4 RNA-binding domain.

This sequence belongs to the class-I aminoacyl-tRNA synthetase family. TyrS type 2 subfamily. As to quaternary structure, homodimer.

It is found in the cytoplasm. It catalyses the reaction tRNA(Tyr) + L-tyrosine + ATP = L-tyrosyl-tRNA(Tyr) + AMP + diphosphate + H(+). Its function is as follows. Catalyzes the attachment of tyrosine to tRNA(Tyr) in a two-step reaction: tyrosine is first activated by ATP to form Tyr-AMP and then transferred to the acceptor end of tRNA(Tyr). The chain is Tyrosine--tRNA ligase from Haemophilus influenzae (strain ATCC 51907 / DSM 11121 / KW20 / Rd).